We begin with the raw amino-acid sequence, 280 residues long: Urease accessory protein UreD 1 (280 aa).

This sequence belongs to the UreD family. UreD, UreF and UreG form a complex that acts as a GTP-hydrolysis-dependent molecular chaperone, activating the urease apoprotein by helping to assemble the nickel containing metallocenter of UreC. The UreE protein probably delivers the nickel.

It is found in the cytoplasm. Required for maturation of urease via the functional incorporation of the urease nickel metallocenter. The chain is Urease accessory protein UreD 1 from Bradyrhizobium sp. (strain BTAi1 / ATCC BAA-1182).